A 1545-amino-acid chain; its full sequence is Dual oxidase 2 (1545 aa).

The signal sequence occupies residues 1–25; it reads MLCIRPEALVLLGALLTVPLDPVGG. The Extracellular portion of the chain corresponds to 26 to 601; it reads QDALSLTWEV…EGSGPGFGIT (576 aa). The interval 30-596 is peroxidase-like; mediates peroxidase activity; sequence SLTWEVQRYD…VIQYFEGSGP (567 aa). N-linked (GlcNAc...) asparagine glycosylation is found at N100, N312, N348, N358, N455, and N549. C124 and C1159 are joined by a disulfide. Residues 602–622 traverse the membrane as a helical segment; that stretch reads IVALCCLPLMSLLISGVVAYF. Residues 623–1037 are Cytoplasmic-facing; it reads RSRERKKLQK…YKRFVENYRR (415 aa). 3 consecutive EF-hand domains span residues 819 to 854, 855 to 890, and 899 to 934; these read PQDM…FMKG, SPED…FIEI, and QLTE…HDSE. Ca(2+)-binding residues include D832, D834, N836, Y838, E843, D868, D870, N872, and E879. An interaction with TXNDC11 region spans residues 960 to 1242; the sequence is RVSFIIRTPE…GSFALIQLPR (283 aa). A helical transmembrane segment spans residues 1038-1058; sequence HIVCVAIFSAICAGLFVERAY. Residues 1059-1074 lie on the Extracellular side of the membrane; it reads YYAFVSPPSGIAETTF. A helical transmembrane segment spans residues 1075–1097; sequence VGIILSRGTAASVSFMFSYILLT. The region spanning 1081–1263 is the Ferric oxidoreductase domain; sequence RGTAASVSFM…YVGDKLVSLS (183 aa). The Cytoplasmic segment spans residues 1098–1125; it reads MCRNLITFLRETFLNHYVPFDAAVDFHR. The helical transmembrane segment at 1126 to 1148 threads the bilayer; it reads WIAMAALVLAILHSVGHVVNVYI. At 1149-1182 the chain is on the extracellular side; it reads FSVSPLSLLACVFPSVFVNDGSKLPQKFYWWFFQ. A helical membrane pass occupies residues 1183 to 1203; that stretch reads TIPGMTGVLLLVVLAIMYVFA. Over 1204 to 1220 the chain is Cytoplasmic; the sequence is SPYFRRRSFRGFWLTHH. The chain crosses the membrane as a helical span at residues 1221 to 1241; that stretch reads FYILLYVLLIIHGSFALIQLP. A topological domain (extracellular) is located at residue R1242. The chain crosses the membrane as a helical span at residues 1243 to 1263; that stretch reads FHIFFLVPALIYVGDKLVSLS. Residues 1264 to 1370 form the FAD-binding FR-type domain; sequence RKKVEISVVK…DGPFGEGHQE (107 aa). Residues 1264–1545 lie on the Cytoplasmic side of the membrane; the sequence is RKKVEISVVK…THFVHHYENF (282 aa).

This sequence in the N-terminal section; belongs to the peroxidase family. In terms of assembly, heterodimer with DUOXA2; disulfide-linked. Interacts with TXNDC11, TPO and CYBA. N-glycosylated. Expressed in thyroid, and the digestive tract especially in stomach, cecum and sigmoidal colon (at protein level). Expressed in thyroid.

The protein resides in the apical cell membrane. Its subcellular location is the cell junction. The catalysed reaction is NADH + O2 + H(+) = H2O2 + NAD(+). It catalyses the reaction NADPH + O2 + H(+) = H2O2 + NADP(+). Its pathway is hormone biosynthesis; thyroid hormone biosynthesis. With respect to regulation, the NADPH oxidase activity is calcium-dependent. Peroxidase activity is inhibited by aminobenzohydrazide. Functionally, generates hydrogen peroxide which is required for the activity of thyroid peroxidase/TPO and lactoperoxidase/LPO. Plays a role in thyroid hormones synthesis and lactoperoxidase-mediated antimicrobial defense at the surface of mucosa. May have its own peroxidase activity through its N-terminal peroxidase-like domain. The sequence is that of Dual oxidase 2 (DUOX2) from Sus scrofa (Pig).